The following is a 138-amino-acid chain: Large ribosomal subunit protein uL16 (138 aa).

The segment covering 1-16 (MLIPRRVKHRKQHHPG) has biased composition (basic residues). Residues 1-25 (MLIPRRVKHRKQHHPGRSGAATGGT) form a disordered region.

This sequence belongs to the universal ribosomal protein uL16 family. In terms of assembly, part of the 50S ribosomal subunit.

Binds 23S rRNA and is also seen to make contacts with the A and possibly P site tRNAs. This chain is Large ribosomal subunit protein uL16, found in Pseudarthrobacter chlorophenolicus (strain ATCC 700700 / DSM 12829 / CIP 107037 / JCM 12360 / KCTC 9906 / NCIMB 13794 / A6) (Arthrobacter chlorophenolicus).